The chain runs to 121 residues: Large ribosomal subunit protein bL12 (121 aa).

This sequence belongs to the bacterial ribosomal protein bL12 family. Homodimer. Part of the ribosomal stalk of the 50S ribosomal subunit. Forms a multimeric L10(L12)X complex, where L10 forms an elongated spine to which 2 to 4 L12 dimers bind in a sequential fashion. Binds GTP-bound translation factors.

Forms part of the ribosomal stalk which helps the ribosome interact with GTP-bound translation factors. Is thus essential for accurate translation. The sequence is that of Large ribosomal subunit protein bL12 from Macrococcus caseolyticus (strain JCSC5402) (Macrococcoides caseolyticum).